Consider the following 351-residue polypeptide: UDP-3-O-acylglucosamine N-acyltransferase (351 aa).

H257 functions as the Proton acceptor in the catalytic mechanism.

It belongs to the transferase hexapeptide repeat family. LpxD subfamily. As to quaternary structure, homotrimer.

The enzyme catalyses a UDP-3-O-[(3R)-3-hydroxyacyl]-alpha-D-glucosamine + a (3R)-hydroxyacyl-[ACP] = a UDP-2-N,3-O-bis[(3R)-3-hydroxyacyl]-alpha-D-glucosamine + holo-[ACP] + H(+). Its pathway is bacterial outer membrane biogenesis; LPS lipid A biosynthesis. Its function is as follows. Catalyzes the N-acylation of UDP-3-O-acylglucosamine using 3-hydroxyacyl-ACP as the acyl donor. Is involved in the biosynthesis of lipid A, a phosphorylated glycolipid that anchors the lipopolysaccharide to the outer membrane of the cell. The polypeptide is UDP-3-O-acylglucosamine N-acyltransferase (Methylorubrum populi (strain ATCC BAA-705 / NCIMB 13946 / BJ001) (Methylobacterium populi)).